Here is a 327-residue protein sequence, read N- to C-terminus: Ventral anterior homeobox 1 (327 aa).

Residues 1–34 are compositionally biased toward basic and acidic residues; the sequence is MFGKQDKMDVRCSTETEANRVSKNGHKEGKDSKG. A disordered region spans residues 1 to 41; that stretch reads MFGKQDKMDVRCSTETEANRVSKNGHKEGKDSKGAEGNIST. A DNA-binding region (homeobox) is located at residues 99-158; sequence PKRTRTSFTAEQLYRLEMEFQRCQYVVGRERTELARQLNLSETQVKVWFQNRRTKQKKDQ. Low complexity predominate over residues 230–245; the sequence is APAGGSPHPPSAGTAA. The disordered stretch occupies residues 230–249; that stretch reads APAGGSPHPPSAGTAAGPPP.

The protein belongs to the EMX homeobox family.

The protein resides in the nucleus. Transcription factor that plays a role in establishing dorsal-ventral polarity in the neural retina. This is Ventral anterior homeobox 1 (VAX1) from Gallus gallus (Chicken).